The following is a 257-amino-acid chain: MKISDFMLEYEKFCPKELAVEGDPVGLQVGNPNDELTKVLVTLDIREQTVAEAKALGVNLIIAKHPLIFRPLSALTSMNDQEKLVLDLARAGIAVYTSHTNIDVVTGGLNDYFSQLLGMTDIEVLDDEEGLGRVGNIELTELSVLTEKVKASFGLDRLRLITYDHNLTQKIGRIAICGGSGGKLWPKALEKKADIYITGDIYYHVGHDMLSAGLLGIDPGHYIEHAFIRLVADKLRSFDMGVKIYESQEKTNPFYDI.

A divalent metal cation contacts are provided by histidine 65, aspartate 103, histidine 221, and glutamate 224.

This sequence belongs to the GTP cyclohydrolase I type 2/NIF3 family. As to quaternary structure, homohexamer.

This chain is GTP cyclohydrolase 1 type 2 homolog (ykiD), found in Lactococcus lactis subsp. lactis (strain IL1403) (Streptococcus lactis).